A 167-amino-acid chain; its full sequence is Small ribosomal subunit protein uS5 (167 aa).

The S5 DRBM domain maps to 12–75 (LQEKLVQVNR…EAARRNMIQV (64 aa)).

This sequence belongs to the universal ribosomal protein uS5 family. In terms of assembly, part of the 30S ribosomal subunit. Contacts proteins S4 and S8.

In terms of biological role, with S4 and S12 plays an important role in translational accuracy. Located at the back of the 30S subunit body where it stabilizes the conformation of the head with respect to the body. The chain is Small ribosomal subunit protein uS5 from Alcanivorax borkumensis (strain ATCC 700651 / DSM 11573 / NCIMB 13689 / SK2).